We begin with the raw amino-acid sequence, 1019 residues long: Insulin-degrading enzyme (1019 aa).

His108 lines the Zn(2+) pocket. Glu111 (proton acceptor) is an active-site residue. Zn(2+)-binding residues include His112 and Glu189. The residue at position 192 (Lys192) is an N6-succinyllysine. Substrate contacts are provided by residues 336-342 (HLIGHEG) and 359-363 (LVGGQ). Arg429 contributes to the ATP binding site. Lys697 is modified (N6-succinyllysine). Positions 853–858 (EKPPHY) match the SlyX motif motif. Position 895-901 (895-901 (DKPKKLS)) interacts with ATP.

Belongs to the peptidase M16 family. In terms of assembly, homodimer. Can also form homotetramers. (Microbial infection) Interacts (via N-terminus) with varicella-zoster virus (VZV) envelope glycoprotein E (via N-terminus); the membrane-associated isoform may function as an entry receptor for this virus. Zn(2+) serves as cofactor. Post-translationally, the N-terminus is blocked. Detected in brain and in cerebrospinal fluid (at protein level).

The protein resides in the cytoplasm. It is found in the cytosol. Its subcellular location is the cell membrane. It localises to the secreted. It carries out the reaction Degradation of insulin, glucagon and other polypeptides. No action on proteins.. Activated by small peptides. Activated by ATP and GTP, and to a lesser extent by CTP, TTP and PPPi. Inhibited by bacitracin. In vitro modification of Cys residues impairs enzyme activity. Its function is as follows. Plays a role in the cellular breakdown of insulin, APP peptides, IAPP peptides, natriuretic peptides, glucagon, bradykinin, kallidin, and other peptides, and thereby plays a role in intercellular peptide signaling. Substrate binding induces important conformation changes, making it possible to bind and degrade larger substrates, such as insulin. Contributes to the regulation of peptide hormone signaling cascades and regulation of blood glucose homeostasis via its role in the degradation of insulin, glucagon and IAPP. Plays a role in the degradation and clearance of APP-derived amyloidogenic peptides that are secreted by neurons and microglia. Degrades the natriuretic peptides ANP, BNP and CNP, inactivating their ability to raise intracellular cGMP. Also degrades an aberrant frameshifted 40-residue form of NPPA (fsNPPA) which is associated with familial atrial fibrillation in heterozygous patients. Involved in antigen processing. Produces both the N terminus and the C terminus of MAGEA3-derived antigenic peptide (EVDPIGHLY) that is presented to cytotoxic T lymphocytes by MHC class I. Functionally, (Microbial infection) The membrane-associated isoform acts as an entry receptor for varicella-zoster virus (VZV). The protein is Insulin-degrading enzyme of Homo sapiens (Human).